A 277-amino-acid polypeptide reads, in one-letter code: F-actin-capping protein subunit beta isoforms 1 and 2 (277 aa).

Ser2 carries the N-acetylserine modification.

It belongs to the F-actin-capping protein beta subunit family. In terms of assembly, component of the F-actin capping complex, composed of a heterodimer of an alpha and a beta subunit. Component of the WASH complex. Component of the F-actin capping complex, composed of a heterodimer of an alpha and a beta subunit. Subunit of dynactin, a multiprotein complex part of a tripartite complex with dynein and a adapter, such as BICDL1, BICD2 or HOOK3. The dynactin complex is built around ACTR1A/ACTB filament and consists of an actin-related filament composed of a shoulder domain, a pointed end and a barbed end. Its length is defined by its flexible shoulder domain. In terms of tissue distribution, isoform 1 is detected in pectoral muscle, cardiac muscle and gizzard. Isoform 2 is detected in brain and liver (at protein level). Isoform 2 is the predominant isoform of nonmuscle tissues and isoform 1 is the predominant isoform of muscle tissues.

The protein localises to the cytoplasm. It is found in the myofibril. The protein resides in the sarcomere. It localises to the z line. Its subcellular location is the i band. The protein localises to the cytoskeleton. Functionally, F-actin-capping proteins bind in a Ca(2+)-independent manner to the fast growing ends of actin filaments (barbed end) thereby blocking the exchange of subunits at these ends. Unlike other capping proteins (such as gelsolin and severin), these proteins do not sever actin filaments. May play a role in the regulation of cell morphology and cytoskeletal organization. In terms of biological role, forms, with CAPZB, the barbed end of the fast growing ends of actin filaments in the dynactin complex and stabilizes dynactin structure. The dynactin multiprotein complex activates the molecular motor dynein for ultra-processive transport along microtubules. The polypeptide is F-actin-capping protein subunit beta isoforms 1 and 2 (CAPZB) (Gallus gallus (Chicken)).